The following is a 261-amino-acid chain: Zinc finger protein 664 (261 aa).

9 C2H2-type zinc fingers span residues 3–25 (YKCPMCREFFSERADLFMHQKIH), 31–53 (HKCDKCDKGFFHISELHIHWRDH), 59–81 (YKCDDCGKDFSTTTKLNRHKKIH), 87–109 (YKCYECGKAFNWSSHLQIHMRVH), 115–137 (YVCSECGRGFSNSSNLCMHQRVH), 143–165 (FKCEECGKAFRHTSSLCMHQRVH), 171–193 (YKCYECGKAFSQSSSLCIHQRVH), 199–221 (YRCCGCGKAFSQSSSLCIHQRVH), and 227–249 (FKCDECGKAFSQSTSLCIHQRVH). K257 participates in a covalent cross-link: Glycyl lysine isopeptide (Lys-Gly) (interchain with G-Cter in SUMO2).

The protein belongs to the krueppel C2H2-type zinc-finger protein family.

It is found in the nucleus. Functionally, may be involved in transcriptional regulation. This is Zinc finger protein 664 (ZNF664) from Pongo abelii (Sumatran orangutan).